The primary structure comprises 201 residues: MNILVIKSSVNEKKGSYSSHLSDLFIKFYLEIHPEDQIEVYDLNQFGLANTNLTIKNFEDKTFYQKAESDFWINKLRKADKIVFSTSMTNFNYSATTKNFFDAITVPNKTFLLDKNTGKYTGLLKNIQNVQILTAQGAPLGWYPFGNHSALIKQIFEFLGAKVRSDFFVLDGTKVAPNNQKPIADFVAQRQNQIKILAENF.

FMN contacts are provided by residues S9 and 16–18 (SYS).

The protein belongs to the azoreductase type 1 family. As to quaternary structure, homodimer. Requires FMN as cofactor.

It catalyses the reaction 2 a quinone + NADH + H(+) = 2 a 1,4-benzosemiquinone + NAD(+). It carries out the reaction N,N-dimethyl-1,4-phenylenediamine + anthranilate + 2 NAD(+) = 2-(4-dimethylaminophenyl)diazenylbenzoate + 2 NADH + 2 H(+). Functionally, quinone reductase that provides resistance to thiol-specific stress caused by electrophilic quinones. Its function is as follows. Also exhibits azoreductase activity. Catalyzes the reductive cleavage of the azo bond in aromatic azo compounds to the corresponding amines. This chain is FMN-dependent NADH:quinone oxidoreductase, found in Mesomycoplasma hyopneumoniae (strain 232) (Mycoplasma hyopneumoniae).